A 572-amino-acid polypeptide reads, in one-letter code: Proline--tRNA ligase (572 aa).

The protein belongs to the class-II aminoacyl-tRNA synthetase family. ProS type 1 subfamily. In terms of assembly, homodimer.

It localises to the cytoplasm. The enzyme catalyses tRNA(Pro) + L-proline + ATP = L-prolyl-tRNA(Pro) + AMP + diphosphate. Catalyzes the attachment of proline to tRNA(Pro) in a two-step reaction: proline is first activated by ATP to form Pro-AMP and then transferred to the acceptor end of tRNA(Pro). As ProRS can inadvertently accommodate and process non-cognate amino acids such as alanine and cysteine, to avoid such errors it has two additional distinct editing activities against alanine. One activity is designated as 'pretransfer' editing and involves the tRNA(Pro)-independent hydrolysis of activated Ala-AMP. The other activity is designated 'posttransfer' editing and involves deacylation of mischarged Ala-tRNA(Pro). The misacylated Cys-tRNA(Pro) is not edited by ProRS. The polypeptide is Proline--tRNA ligase (Escherichia coli O127:H6 (strain E2348/69 / EPEC)).